A 260-amino-acid chain; its full sequence is Exosome complex component Rrp42 (260 aa).

The protein belongs to the RNase PH family. Rrp42 subfamily. As to quaternary structure, component of the archaeal exosome complex. Forms a hexameric ring-like arrangement composed of 3 Rrp41-Rrp42 heterodimers. The hexameric ring associates with a trimer of Rrp4 and/or Csl4 subunits.

It is found in the cytoplasm. Its function is as follows. Non-catalytic component of the exosome, which is a complex involved in RNA degradation. Contributes to the structuring of the Rrp41 active site. The polypeptide is Exosome complex component Rrp42 (Methanocella arvoryzae (strain DSM 22066 / NBRC 105507 / MRE50)).